A 130-amino-acid chain; its full sequence is Protein LLP homolog (130 aa).

Positions 1 to 21 (MAKSLRSKWKRKMRAEKRKKN) are enriched in basic residues. Disordered stretches follow at residues 1–23 (MAKS…KNAP) and 57–76 (QEKM…EKDD). Residues 10-78 (KRKMRAEKRK…GADEEKDDMK (69 aa)) adopt a coiled-coil conformation. Residue Lys-78 forms a Glycyl lysine isopeptide (Lys-Gly) (interchain with G-Cter in SUMO2) linkage. A compositionally biased stretch (basic residues) spans 104-124 (RQRKRLKAKREKKRGKSRAKA). The interval 104–130 (RQRKRLKAKREKKRGKSRAKAAKGLAW) is disordered.

The protein belongs to the learning-associated protein family. Interacts with CTCF, MYO1C and with the transcriptional machinery, including RNA polymerase II and TBP. In terms of tissue distribution, widely expressed, with high levels in testis and spleen and low levels in heart. In the brain, expressed in the cortex and hippocampus, and at very low levels in the cerebellum.

The protein localises to the nucleus. It localises to the nucleolus. It is found in the chromosome. Its function is as follows. In hippocampal neurons, regulates dendritic and spine growth and synaptic transmission. The polypeptide is Protein LLP homolog (Llph) (Mus musculus (Mouse)).